The primary structure comprises 78 residues: Large ribosomal subunit protein bL28 (78 aa).

Positions 1 to 29 (MSAHCQVTGRQPSFGKSVSHSHRRTSRRW) are disordered.

The protein belongs to the bacterial ribosomal protein bL28 family.

This chain is Large ribosomal subunit protein bL28, found in Corynebacterium efficiens (strain DSM 44549 / YS-314 / AJ 12310 / JCM 11189 / NBRC 100395).